The following is a 119-amino-acid chain: T cell receptor alpha variable 29/delta variable 5 (119 aa).

Positions 1 to 21 (MAMLLGASVLILWLQPDWVNS) are cleaved as a signal peptide. In terms of domain architecture, Ig-like spans 22–119 (QQKNDDQQVK…DSAVYFCAAS (98 aa)). A disulfide bridge connects residues Cys-49 and Cys-116. Asn-93 is a glycosylation site (N-linked (GlcNAc...) asparagine).

Alpha-beta TR is a heterodimer composed of an alpha and beta chain; disulfide-linked. The alpha-beta TR is associated with the transmembrane signaling CD3 coreceptor proteins to form the TR-CD3 (TcR or TCR). The assembly of alpha-beta TR heterodimers with CD3 occurs in the endoplasmic reticulum where a single alpha-beta TR heterodimer associates with one CD3D-CD3E heterodimer, one CD3G-CD3E heterodimer and one CD247 homodimer forming a stable octameric structure. CD3D-CD3E and CD3G-CD3E heterodimers preferentially associate with TR alpha and TR beta chains, respectively. The association of the CD247 homodimer is the last step of TcR assembly in the endoplasmic reticulum and is required for transport to the cell surface.

It localises to the cell membrane. V region of the variable domain of T cell receptor (TR) alpha chain that participates in the antigen recognition. Alpha-beta T cell receptors are antigen specific receptors which are essential to the immune response and are present on the cell surface of T lymphocytes. Recognize peptide-major histocompatibility (MH) (pMH) complexes that are displayed by antigen presenting cells (APC), a prerequisite for efficient T cell adaptive immunity against pathogens. Binding of alpha-beta TR to pMH complex initiates TR-CD3 clustering on the cell surface and intracellular activation of LCK that phosphorylates the ITAM motifs of CD3G, CD3D, CD3E and CD247 enabling the recruitment of ZAP70. In turn ZAP70 phosphorylates LAT, which recruits numerous signaling molecules to form the LAT signalosome. The LAT signalosome propagates signal branching to three major signaling pathways, the calcium, the mitogen-activated protein kinase (MAPK) kinase and the nuclear factor NF-kappa-B (NF-kB) pathways, leading to the mobilization of transcription factors that are critical for gene expression and essential for T cell growth and differentiation. The T cell repertoire is generated in the thymus, by V-(D)-J rearrangement. This repertoire is then shaped by intrathymic selection events to generate a peripheral T cell pool of self-MH restricted, non-autoaggressive T cells. Post-thymic interaction of alpha-beta TR with the pMH complexes shapes TR structural and functional avidity. This Homo sapiens (Human) protein is T cell receptor alpha variable 29/delta variable 5.